Consider the following 792-residue polypeptide: Phenylalanine--tRNA ligase beta subunit (792 aa).

The region spanning 39 to 147 (AAAFSGVVVG…DNAPIGQDIR (109 aa)) is the tRNA-binding domain. In terms of domain architecture, B5 spans 400 to 475 (PERPAVRLRP…RLHGYDAIPA (76 aa)). Residues Asp453, Asp459, Glu462, and Glu463 each coordinate Mg(2+). The FDX-ACB domain occupies 698–791 (SRQPAVTRDV…TETSLGARLR (94 aa)).

This sequence belongs to the phenylalanyl-tRNA synthetase beta subunit family. Type 1 subfamily. As to quaternary structure, tetramer of two alpha and two beta subunits. It depends on Mg(2+) as a cofactor.

The protein resides in the cytoplasm. It carries out the reaction tRNA(Phe) + L-phenylalanine + ATP = L-phenylalanyl-tRNA(Phe) + AMP + diphosphate + H(+). The chain is Phenylalanine--tRNA ligase beta subunit from Aromatoleum aromaticum (strain DSM 19018 / LMG 30748 / EbN1) (Azoarcus sp. (strain EbN1)).